Consider the following 326-residue polypeptide: Heterodimeric geranylgeranyl pyrophosphate synthase small subunit, chloroplastic (326 aa).

A chloroplast-targeting transit peptide spans Met-1–Arg-33. Positions 88 and 120 each coordinate isopentenyl diphosphate. The Mg(2+) site is built by Asp-127 and Asp-133. Arg-138 is a binding site for dimethylallyl diphosphate. Arg-139 contacts isopentenyl diphosphate. Lys-220 and Gln-258 together coordinate dimethylallyl diphosphate. Residues Gly-274–Tyr-301 are a coiled coil.

Belongs to the FPP/GGPP synthase family. In terms of assembly, part of a heterodimeric geranyl(geranyl)diphosphate synthase. Interacts with GGPPS1 or GGPPS2, but not with GGPPS9. Interacts with LIL3.1 and LIL3.2. Mg(2+) is required as a cofactor. In terms of tissue distribution, expressed ubiquitously.

The protein localises to the plastid. Its subcellular location is the chloroplast thylakoid membrane. Functionally, heterodimeric geranyl(geranyl)-diphosphate (GPP) synthase small subunit. The small subunit alone is inactive in vitro while the large subunit GGPPS1 catalyzes mainly the production of geranygeranyl-diphosphate in vitro. Upon association of the two subunits, the product profile changes and the production of gerany-diphosphate is strongly increased. This chain is Heterodimeric geranylgeranyl pyrophosphate synthase small subunit, chloroplastic (GGR), found in Arabidopsis thaliana (Mouse-ear cress).